A 119-amino-acid chain; its full sequence is Large ribosomal subunit protein uL18 (119 aa).

Positions 1–25 are disordered; it reads MITKIDKNKVRKKRHARVRSKISGT. Basic residues predominate over residues 9–20; that stretch reads KVRKKRHARVRS.

The protein belongs to the universal ribosomal protein uL18 family. As to quaternary structure, part of the 50S ribosomal subunit; part of the 5S rRNA/L5/L18/L25 subcomplex. Contacts the 5S and 23S rRNAs.

In terms of biological role, this is one of the proteins that bind and probably mediate the attachment of the 5S RNA into the large ribosomal subunit, where it forms part of the central protuberance. This Listeria innocua serovar 6a (strain ATCC BAA-680 / CLIP 11262) protein is Large ribosomal subunit protein uL18.